We begin with the raw amino-acid sequence, 467 residues long: Venom prothrombin activator pseutarin-C catalytic subunit (467 aa).

The signal sequence occupies residues 1–22 (MAPQLLLCLILTFLWSLPEAES). A propeptide spanning residues 23-40 (NVFLKSKVANRFLQRTKR) is cleaved from the precursor. Residues 41-86 (ANSLVEEFKSGNIERECIEERCSKEEAREVFEDDEKTETFWNVYVD) enclose the Gla domain. Glu-46, Glu-47, Glu-54, Glu-56, Glu-59, Glu-60, Glu-65, Glu-66, Glu-69, and Glu-72 each carry 4-carboxyglutamate. Cysteines 57 and 62 form a disulfide. Residues 86–122 (DGDQCSSNPCHYRGICKDGIGSYTCTCLSGYEGKNCE) enclose the EGF-like 1; calcium-binding domain. 11 disulfide bridges follow: Cys-90/Cys-101, Cys-95/Cys-110, Cys-112/Cys-121, Cys-129/Cys-140, Cys-136/Cys-149, Cys-151/Cys-164, Cys-172/Cys-329, Cys-216/Cys-221, Cys-236/Cys-252, Cys-377/Cys-391, and Cys-402/Cys-430. An O-linked (Hex...) serine glycan is attached at Ser-92. The EGF-like 2 domain occupies 129–164 (CRVDNGNCWHFCKSVQNDIQCSCAEGYLLGEDGHSC). Positions 182 to 209 (REASLPDFVQSHNATLLKKSDNPSPDIR) are cleaved as a propeptide — activation peptide. The Peptidase S1 domain occupies 210–454 (IVNGMDCKLG…FIPWIKRIMR (245 aa)). His-251 serves as the catalytic Charge relay system. N-linked (GlcNAc...) asparagine glycosylation is present at Asn-254. The active-site Charge relay system is the Asp-309. Ser-406 (charge relay system) is an active-site residue.

This sequence belongs to the peptidase S1 family. Snake venom subfamily. As to quaternary structure, heterodimer of a light and a heavy chains; disulfide-linked. Is associated with pseutarin-C non-catalytic subunit (AC Q7SZN0) in a non-covalent manner. Gamma-carboxyglutamate residues are formed by vitamin K dependent carboxylation. These residues are essential for the binding of calcium. As to expression, expressed by the venom gland.

The protein localises to the secreted. The catalysed reaction is Selective cleavage of Arg-|-Thr and then Arg-|-Ile bonds in prothrombin to form thrombin.. With respect to regulation, activated by calcium and negatively charged phospholipids. Its function is as follows. Snake prothrombin activator that attacks the hemostatic system of prey. This non-catalytic subunit is functionally similar to blood coagulation factor V. It serves as a critical cofactor for the prothrombinase activity of the catalytic subunit, which is similar to the blood coagulation factor X. The complex converts prothrombin to thrombin by sequential cleavage at two positions, Arg-320 followed by Arg-271. Cleavage at Arg-320 produces an active intermediate known as meizothrombin. Meizothrombin is the 'second' substrate for prothrombinase, and it docks in an altered manner to present the second cleavage site (271). Cleavage at Arg-271 releases active thrombin from its pro-fragment. This order of events is reversed if the protease component of prothrombinase is used on its own, suggesting that the 271 site is inherently more accessible to proteolysis. The complex converts prothrombin to thrombin in presence but also in the absence of membrane. The polypeptide is Venom prothrombin activator pseutarin-C catalytic subunit (Pseudonaja textilis (Eastern brown snake)).